A 597-amino-acid polypeptide reads, in one-letter code: UvrABC system protein C (597 aa).

Residues 15–93 (DNPGVYQYYD…IKTLQPRYNV (79 aa)) form the GIY-YIG domain. Residues 207–242 (KESLKDFKKLMNNYAQNLQFEEAQKIKEKIEVLENY) enclose the UVR domain.

The protein belongs to the UvrC family. In terms of assembly, interacts with UvrB in an incision complex.

Its subcellular location is the cytoplasm. Functionally, the UvrABC repair system catalyzes the recognition and processing of DNA lesions. UvrC both incises the 5' and 3' sides of the lesion. The N-terminal half is responsible for the 3' incision and the C-terminal half is responsible for the 5' incision. This is UvrABC system protein C from Flavobacterium johnsoniae (strain ATCC 17061 / DSM 2064 / JCM 8514 / BCRC 14874 / CCUG 350202 / NBRC 14942 / NCIMB 11054 / UW101) (Cytophaga johnsonae).